The chain runs to 210 residues: Protein LURP-one-related 5 (210 aa).

This sequence belongs to the LOR family.

Functionally, might be related to the phospholipid scramblase and tubby-like superfamily of membrane tethered transcription factors. The sequence is that of Protein LURP-one-related 5 from Arabidopsis thaliana (Mouse-ear cress).